Here is a 282-residue protein sequence, read N- to C-terminus: Biotin synthase (282 aa).

In terms of domain architecture, Radical SAM core spans 1-228 (MQEIFLCSIS…NARLMVAGGR (228 aa)). [4Fe-4S] cluster-binding residues include C17, C21, and C24. Residues C61, C96, C154, and R221 each contribute to the [2Fe-2S] cluster site.

This sequence belongs to the radical SAM superfamily. Biotin synthase family. In terms of assembly, homodimer. Requires [4Fe-4S] cluster as cofactor. It depends on [2Fe-2S] cluster as a cofactor.

It catalyses the reaction (4R,5S)-dethiobiotin + (sulfur carrier)-SH + 2 reduced [2Fe-2S]-[ferredoxin] + 2 S-adenosyl-L-methionine = (sulfur carrier)-H + biotin + 2 5'-deoxyadenosine + 2 L-methionine + 2 oxidized [2Fe-2S]-[ferredoxin]. It participates in cofactor biosynthesis; biotin biosynthesis; biotin from 7,8-diaminononanoate: step 2/2. In terms of biological role, catalyzes the conversion of dethiobiotin (DTB) to biotin by the insertion of a sulfur atom into dethiobiotin via a radical-based mechanism. The chain is Biotin synthase from Helicobacter pylori (strain G27).